Here is a 225-residue protein sequence, read N- to C-terminus: Holliday junction branch migration complex subunit RuvA (225 aa).

Residues 1 to 71 (MISWINGELV…EDSDLLFGFT (71 aa)) are domain I. Residues 72–150 (SKDQKFFFIE…SKIQIEEEKG (79 aa)) form a domain II region. Residues 151-161 (QEEFEITNPEI) form a flexible linker region. The segment at 161 to 225 (IYKLMEDLQL…LDQGNSNLAR (65 aa)) is domain III.

This sequence belongs to the RuvA family. Homotetramer. Forms an RuvA(8)-RuvB(12)-Holliday junction (HJ) complex. HJ DNA is sandwiched between 2 RuvA tetramers; dsDNA enters through RuvA and exits via RuvB. An RuvB hexamer assembles on each DNA strand where it exits the tetramer. Each RuvB hexamer is contacted by two RuvA subunits (via domain III) on 2 adjacent RuvB subunits; this complex drives branch migration. In the full resolvosome a probable DNA-RuvA(4)-RuvB(12)-RuvC(2) complex forms which resolves the HJ.

Its subcellular location is the cytoplasm. The RuvA-RuvB-RuvC complex processes Holliday junction (HJ) DNA during genetic recombination and DNA repair, while the RuvA-RuvB complex plays an important role in the rescue of blocked DNA replication forks via replication fork reversal (RFR). RuvA specifically binds to HJ cruciform DNA, conferring on it an open structure. The RuvB hexamer acts as an ATP-dependent pump, pulling dsDNA into and through the RuvAB complex. HJ branch migration allows RuvC to scan DNA until it finds its consensus sequence, where it cleaves and resolves the cruciform DNA. The protein is Holliday junction branch migration complex subunit RuvA of Prochlorococcus marinus (strain MIT 9215).